Reading from the N-terminus, the 447-residue chain is Methyl-coenzyme M reductase II subunit beta (447 aa).

Tyr368 is a binding site for coenzyme M. Gly370 serves as a coordination point for coenzyme B.

It belongs to the methyl-coenzyme M reductase beta subunit family. In terms of assembly, MCR is a hexamer of two alpha, two beta, and two gamma chains, forming a dimer of heterotrimers. Coenzyme F430 serves as cofactor.

It carries out the reaction coenzyme B + methyl-coenzyme M = methane + coenzyme M-coenzyme B heterodisulfide. It participates in one-carbon metabolism; methyl-coenzyme M reduction; methane from methyl-coenzyme M: step 1/1. In terms of biological role, component of the methyl-coenzyme M reductase (MCR) I that catalyzes the reductive cleavage of methyl-coenzyme M (CoM-S-CH3 or 2-(methylthio)ethanesulfonate) using coenzyme B (CoB or 7-mercaptoheptanoylthreonine phosphate) as reductant which results in the production of methane and the mixed heterodisulfide of CoB and CoM (CoM-S-S-CoB). This is the final step in methanogenesis. This is Methyl-coenzyme M reductase II subunit beta (mrtB) from Methanocaldococcus jannaschii (strain ATCC 43067 / DSM 2661 / JAL-1 / JCM 10045 / NBRC 100440) (Methanococcus jannaschii).